A 406-amino-acid polypeptide reads, in one-letter code: Elongation factor Tu-B (406 aa).

The region spanning 10–215 (KPHVNVGTIG…AIDEYIPTPV (206 aa)) is the tr-type G domain. A G1 region spans residues 19-26 (GHVDHGKT). 19–26 (GHVDHGKT) is a binding site for GTP. Thr26 is a Mg(2+) binding site. The tract at residues 61 to 65 (GITIN) is G2. The tract at residues 82-85 (DCPG) is G3. GTP contacts are provided by residues 82 to 86 (DCPGH) and 137 to 140 (NKVD). A G4 region spans residues 137 to 140 (NKVD). Residues 175-177 (SAL) are G5. At Thr395 the chain carries Phosphothreonine.

The protein belongs to the TRAFAC class translation factor GTPase superfamily. Classic translation factor GTPase family. EF-Tu/EF-1A subfamily. Monomer. Post-translationally, phosphorylated on a threonine.

It localises to the cytoplasm. The enzyme catalyses GTP + H2O = GDP + phosphate + H(+). GTP hydrolase that promotes the GTP-dependent binding of aminoacyl-tRNA to the A-site of ribosomes during protein biosynthesis. Functionally, protects glycyl-tRNA(Gly) from hydrolysis by E.coli D-aminoacyl-tRNA deacylase (dtd). The sequence is that of Elongation factor Tu-B from Thermus thermophilus (strain ATCC 27634 / DSM 579 / HB8).